Consider the following 52-residue polypeptide: Mitogenic lectin alpha chain (52 aa).

This sequence belongs to the leguminous lectin family. As to quaternary structure, tetramer of two alpha and two beta chains.

In Vicia sativa (Spring vetch), this protein is Mitogenic lectin alpha chain.